The following is a 78-amino-acid chain: Small integral membrane protein 1 (78 aa).

Met-1 is subject to N-acetylmethionine. Residues 1–22 (MQSQESGVHYSRWDSSSRDEVS) form a disordered region. Residues 1-48 (MQSQESGVHYSRWDSSSRDEVSMTAMSSSEEASCYRRISQKLCSGKLG) are Cytoplasmic-facing. Phosphoserine is present on residues Ser-6, Ser-17, Ser-22, and Ser-27. Basic and acidic residues predominate over residues 11–21 (SRWDSSSRDEV). Residues 49-69 (IAMKVLGGVALFWIIFILGYI) traverse the membrane as a helical; Signal-anchor for type II membrane protein segment. At 70–78 (TGYYVHKCK) the chain is on the extracellular side.

Belongs to the SMIM1 family. As to quaternary structure, homooligomer; disulfide-linked.

The protein resides in the cell membrane. Its function is as follows. Regulator of red blood cell formation. This chain is Small integral membrane protein 1, found in Mus musculus (Mouse).